The primary structure comprises 1026 residues: P3N-PIPO polyprotein (1026 aa).

Residues 165–308 (RMSEASLQLF…KEQSNEIVHY (144 aa)) enclose the Peptidase S30 domain. Catalysis depends on for P1 proteinase activity residues histidine 216, aspartate 225, and serine 259. The Involved in interaction with stylet and aphid transmission motif lies at 360 to 363 (KITC). The short motif at 618 to 620 (PTK) is the Involved in virions binding and aphid transmission element. Residues 644-766 (MFIAKAGYCY…DSSMKTYLVG (123 aa)) enclose the Peptidase C6 domain. Residues cysteine 652 and histidine 725 each act as for helper component proteinase activity in the active site.

The protein belongs to the potyviridae P3N-PIPO polyprotein family. Interacts (via PIPO domain) with host PCaP1 protein; this interaction may help to anchor the movement complex to the plasma membrane from which the complex could move to the plasmodesmata. Post-translationally, potyviral RNA is expressed as two polyproteins which undergo post-translational proteolytic processing. Genome polyprotein is processed by NIa-pro, P1 and HC-pro proteinases resulting in the production of at least ten individual proteins. P3N-PIPO is cleaved by P1 and HC-pro proteinases resulting in the production of three individual proteins. The P1 proteinase and the HC-pro cleave only their respective C-termini autocatalytically.

The protein resides in the host cell junction. The protein localises to the host plasmodesma. It carries out the reaction Hydrolyzes a Gly-|-Gly bond at its own C-terminus, commonly in the sequence -Tyr-Xaa-Val-Gly-|-Gly, in the processing of the potyviral polyprotein.. Required for aphid transmission and also has proteolytic activity. Only cleaves a Gly-Gly dipeptide at its own C-terminus. Interacts with virions and aphid stylets. Acts as a suppressor of RNA-mediated gene silencing, also known as post-transcriptional gene silencing (PTGS), a mechanism of plant viral defense that limits the accumulation of viral RNAs. May have RNA-binding activity. Its function is as follows. Allows efficient cell to cell propagation, by bypassing the host cell wall barrier. Transports viral genome to neighboring plant cells directly through plasmosdesmata, without any budding. The chain is P3N-PIPO polyprotein from Prunus armeniaca (Apricot).